The chain runs to 141 residues: Hemoglobin subunit alpha-A (141 aa).

The region spanning 1-141 (VLSAADKNNV…VGNVLTAKYR (141 aa)) is the Globin domain. His-58 is a binding site for O2. Heme b is bound at residue His-87.

This sequence belongs to the globin family. In terms of assembly, heterotetramer of two alpha chains and two beta chains. As to expression, red blood cells.

Its function is as follows. Involved in oxygen transport from the lung to the various peripheral tissues. This is Hemoglobin subunit alpha-A (HBAA) from Francolinus pondicerianus (Grey francolin).